A 412-amino-acid chain; its full sequence is NAD-dependent dihydropyrimidine dehydrogenase subunit PreT (412 aa).

Glu-286 provides a ligand contact to NAD(+).

Belongs to the NADH dehydrogenase family. As to quaternary structure, heterotetramer of 2 PreA and 2 PreT subunits.

It catalyses the reaction 5,6-dihydrouracil + NAD(+) = uracil + NADH + H(+). The enzyme catalyses 5,6-dihydrothymine + NAD(+) = thymine + NADH + H(+). Involved in pyrimidine base degradation. Catalyzes physiologically the reduction of uracil to 5,6-dihydrouracil (DHU) by using NADH as a specific cosubstrate. It also catalyzes the reverse reaction and the reduction of thymine to 5,6-dihydrothymine (DHT). The protein is NAD-dependent dihydropyrimidine dehydrogenase subunit PreT (preT) of Escherichia coli O157:H7.